The chain runs to 345 residues: High mobility group protein 20A (345 aa).

Disordered regions lie at residues 1–124 and 167–198; these read MENT…TERP and QYQN…VRGV. Polar residues-rich tracts occupy residues 32–48 and 57–67; these read LSGS…PTLQ and LQQSGEQQLGN. Residues 80-94 show a composition bias toward basic residues; sequence TRRGGWTKGRKRKRS. Residues 101-169 constitute a DNA-binding region (HMG box); sequence PKAPLTGYVR…RYTKELQQYQ (69 aa). Residues 112–124 show a composition bias toward basic and acidic residues; sequence MNERREQLRTERP. Over residues 167–180 the composition is skewed to polar residues; the sequence is QYQNTDAYQTYSRK. The stretch at 227-290 forms a coiled coil; sequence SKAREAELRQ…QHLQSVRQAL (64 aa).

It is found in the nucleus. Plays a role in neuronal differentiation. The protein is High mobility group protein 20A (hmg20a) of Xenopus tropicalis (Western clawed frog).